Consider the following 70-residue polypeptide: Frenatin 4.1 (70 aa).

Residues 1–22 (MAFLKKSLFLVLFLGLVNLSIC) form the signal peptide. A propeptide spanning residues 23–46 (EEEKREEENKEEEDENEALSEVKR) is cleaved from the precursor. Position 68 is a lysine amide (Lys-68).

It belongs to the frog skin active peptide (FSAP) family. Frenatin subfamily. In terms of tissue distribution, expressed by the skin glands.

It localises to the secreted. The protein resides in the target cell membrane. In terms of biological role, peptide with unknown function. Does not show antimicrobial activity against S.aureus (MIC&gt;512 ug/mL), E.coli (MIC&gt;512 ug/mL) and C.albicans (MIC&gt;512 ug/mL). Does not show hemolytic activity. Antimicrobial peptide with activity against E.coli (MIC=128 ug/mL or 54 uM) and C.albicans (MIC=256 ug/mL or 108 uM). Does not show activity against S.aureus (MIC&gt;512 ug/mL). Does not show hemolytic activity. The polypeptide is Frenatin 4.1 (Nyctimystes infrafrenatus (White-lipped tree frog)).